The chain runs to 117 residues: Non-specific lipid-transfer protein (117 aa).

A signal peptide spans 1–26; that stretch reads MASSAVIKLACAVLLCIVVAAPYAEA. Intrachain disulfides connect Cys30/Cys76, Cys40/Cys53, Cys54/Cys99, and Cys74/Cys113.

It belongs to the plant LTP family.

Its function is as follows. Plant non-specific lipid-transfer proteins transfer phospholipids as well as galactolipids across membranes. May play a role in wax or cutin deposition in the cell walls of expanding epidermal cells and certain secretory tissues. This is Non-specific lipid-transfer protein from Spinacia oleracea (Spinach).